Consider the following 281-residue polypeptide: Nuclear transcription factor Y subunit nfya-2 (281 aa).

Disordered stretches follow at residues 1–27 (MNPRGNPSKMPTQIVLNRRPAAPARPQ) and 163–261 (REMR…VQEE). The Subunit association domain (SAD) signature appears at 150–173 (MVNPRQYKRIIKRREMRQKMEDSG). Positions 166 to 188 (RQKMEDSGRLPLERQKYMHESRR) are enriched in basic and acidic residues. Residues 180–204 (QKYMHESRRQHALKRRRTGGRFDAN) constitute a DNA-binding region (NFYA/HAP2-type). The span at 189-198 (QHALKRRRTG) shows a compositional bias: basic residues. The segment covering 204–220 (NAEAAAASSEPSISSAA) has biased composition (low complexity).

The protein belongs to the NFYA/HAP2 subunit family. In terms of assembly, forms a heterotrimeric transcription factor complex (nfya-2-NF-Y complex) composed of nfya-2, nfyb-1 and nfyc-1. Interacts with the nfyb-1 and nfyc-1 dimer; the interaction is required for subsequent binding to the 5'-CCAAT-3' box motif in DNA. Does not interact with either nfyb-1 or nfyc-1 in their monomeric form. In terms of tissue distribution, highly expressed in certain parts of the gonads. Expressed in the spermatheca, intestine and in some neurons in the head. Not expressed in the intestine, the hypodermis, body wall muscle surrounding the pseudocoelomic space, secretory cells in the pharyngeal terminal bulb wall, in the small ganglia surrounding the pharynx and in the neurons running anteriorly to the sensory organs in the head.

It localises to the nucleus. Component of the sequence-specific heterotrimeric transcription factor (nfya-2-NF-Y) which specifically recognizes a 5'-CCAAT-3' box motif found in the promoters of its target genes to regulate their expression and control cellular identity in particular tissue types. In association with the components in the nfya-2-NF-Y complex, may repress the expression of the T-box transcription factor tbx-2 throughout larval development, which most likely restricts its expression to certain tissues. This is Nuclear transcription factor Y subunit nfya-2 from Caenorhabditis elegans.